Reading from the N-terminus, the 206-residue chain is Uridine kinase (206 aa).

An ATP-binding site is contributed by 9-16 (GGSGSGKT).

Belongs to the uridine kinase family.

It localises to the cytoplasm. The enzyme catalyses uridine + ATP = UMP + ADP + H(+). The catalysed reaction is cytidine + ATP = CMP + ADP + H(+). The protein operates within pyrimidine metabolism; CTP biosynthesis via salvage pathway; CTP from cytidine: step 1/3. Its pathway is pyrimidine metabolism; UMP biosynthesis via salvage pathway; UMP from uridine: step 1/1. The polypeptide is Uridine kinase (Borrelia turicatae (strain 91E135)).